Consider the following 213-residue polypeptide: ATP-dependent Clp protease proteolytic subunit 1 (213 aa).

The active-site Nucleophile is the S108. Residue H133 is part of the active site.

It belongs to the peptidase S14 family. As to quaternary structure, fourteen ClpP subunits assemble into 2 heptameric rings which stack back to back to give a disk-like structure with a central cavity, resembling the structure of eukaryotic proteasomes.

The protein localises to the cytoplasm. The catalysed reaction is Hydrolysis of proteins to small peptides in the presence of ATP and magnesium. alpha-casein is the usual test substrate. In the absence of ATP, only oligopeptides shorter than five residues are hydrolyzed (such as succinyl-Leu-Tyr-|-NHMec, and Leu-Tyr-Leu-|-Tyr-Trp, in which cleavage of the -Tyr-|-Leu- and -Tyr-|-Trp bonds also occurs).. Its function is as follows. Cleaves peptides in various proteins in a process that requires ATP hydrolysis. Has a chymotrypsin-like activity. Plays a major role in the degradation of misfolded proteins. This chain is ATP-dependent Clp protease proteolytic subunit 1, found in Frankia casuarinae (strain DSM 45818 / CECT 9043 / HFP020203 / CcI3).